A 392-amino-acid polypeptide reads, in one-letter code: Formate-dependent phosphoribosylglycinamide formyltransferase (392 aa).

N(1)-(5-phospho-beta-D-ribosyl)glycinamide contacts are provided by residues glutamate 22–leucine 23 and glutamate 82. Residues arginine 114, lysine 155, serine 160–glutamine 165, glutamate 195–valine 198, and glutamate 203 contribute to the ATP site. An ATP-grasp domain is found at arginine 119–leucine 308. Residues glutamate 267 and glutamate 279 each coordinate Mg(2+). N(1)-(5-phospho-beta-D-ribosyl)glycinamide-binding positions include aspartate 286, lysine 355, and arginine 362–arginine 363.

It belongs to the PurK/PurT family. As to quaternary structure, homodimer.

It catalyses the reaction N(1)-(5-phospho-beta-D-ribosyl)glycinamide + formate + ATP = N(2)-formyl-N(1)-(5-phospho-beta-D-ribosyl)glycinamide + ADP + phosphate + H(+). The protein operates within purine metabolism; IMP biosynthesis via de novo pathway; N(2)-formyl-N(1)-(5-phospho-D-ribosyl)glycinamide from N(1)-(5-phospho-D-ribosyl)glycinamide (formate route): step 1/1. In terms of biological role, involved in the de novo purine biosynthesis. Catalyzes the transfer of formate to 5-phospho-ribosyl-glycinamide (GAR), producing 5-phospho-ribosyl-N-formylglycinamide (FGAR). Formate is provided by PurU via hydrolysis of 10-formyl-tetrahydrofolate. In Salmonella typhimurium (strain LT2 / SGSC1412 / ATCC 700720), this protein is Formate-dependent phosphoribosylglycinamide formyltransferase.